A 1249-amino-acid polypeptide reads, in one-letter code: MDAKARNCLLQHREALEKDIKTSYIMDHMISNGVLSVIEEEKVKSQATQYQRAAALIKMILNKDNCAYISFYNALLHEGYKDLAALLQSGLPLVSSSSGKDTDGGITSFVRTVLCEGGVPQRPVIFVTRKKLVHAIQQKLWKLNGEPGWVTIYGMAGCGKSVLAAEAVRDHSLLEGCFSGGVHWVSIGKQDKSGLLMKLQNLCMRLDQEESFSQRLPLNIEEAKDRLRVLMLRKHPRSLLILDDVWDPWVLKAFDNQCQILLTTRDKSVTDSVMGPKHVVPVESGLGREKGLEILSLFVNMKKEDLPAEAHSIIKECKGSPLVVSLIGALLRDFPNRWAYYLRQLQNKQFKRIRKSSSYDYEALDEAMSISVEMLREDIKDYYTDLSILQKDVKVPTKVLCVLWDLETEEVEDILQEFVNKSLLFCNRNGKSFCYYLHDLQVDFLTEKNRSQLQDLHRKMVTQFQRYYQPHTLSPDQEDCMYWYNFLAYHMASANMHKELCALMFSLDWIKAKTELVGPAHLIHEFVAYRHILDEKDCAVCENFQEFLSLNGHLLGRQPFPNIVQLGLCEPETSEVYRQAKLQAKQEGDTGRLYLEWINKKTIKNLSRLVVRPHTDAVYHACFSQDGQRIASCGADKTLQVFKAETGEKLLDIKAHEDEVLCCAFSSDDSYIATCSADKKVKIWDSATGKLVHTYDEHSEQVNCCHFTNKSNHLLLATGSNDFFLKLWDLNQKECRNTMFGHTNSVNHCRFSPDDELLASCSADGTLRLWDVRSANERKSINVKRFFLSSEDPPEDVEVIVKCCSWSADGDKIIVAAKNKVLLFDIHTSGLLAEIHTGHHSTIQYCDFSPYDHLAVIALSQYCVELWNIDSRLKVADCRGHLSWVHGVMFSPDGSSFLTASDDQTIRVWETKKVCKNSAIVLKQEIDVVFQENETMVLAVDNIRGLQLIAGKTGQIDYLPEAQVSCCCLSPHLEYVAFGDEDGAIKIIELPNNRVFSSGVGHKKAVRHIQFTADGKTLISSSEDSVIQVWNWQTGDYVFLQAHQETVKDFRLLQDSRLLSWSFDGTVKVWNVITGRIERDFTCHQGTVLSCAISSDATKFSSTSADKTAKIWSFDLLSPLHELKGHNGCVRCSAFSLDGILLATGDDNGEIRIWNVSDGQLLHSCAPISVEEGTATHGGWVTDVCFSPDSKTLVSAGGYLKWWNVATGDSSQTFYTNGTNLKKIHVSPDFRTYVTVDNLGILYILQVLE.

The region spanning 1 to 90 (MDAKARNCLL…KDLAALLQSG (90 aa)) is the CARD domain. Positions 106 to 415 (ITSFVRTVLC…LETEEVEDIL (310 aa)) constitute an NB-ARC domain. ATP contacts are provided by residues 154 to 161 (GMAGCGKS) and R265. The stretch at 613 to 652 (PHTDAVYHACFSQDGQRIASCGADKTLQVFKAETGEKLLD) is one WD 1-1 repeat. Residues 655–694 (AHEDEVLCCAFSSDDSYIATCSADKKVKIWDSATGKLVHT) form a WD 1-2 repeat. Residues 697-738 (EHSEQVNCCHFTNKSNHLLLATGSNDFFLKLWDLNQKECRNT) form a WD 1-3 repeat. A WD 1-4 repeat occupies 741–780 (GHTNSVNHCRFSPDDELLASCSADGTLRLWDVRSANERKS). Residues 796 to 837 (DVEVIVKCCSWSADGDKIIVAAKNKVLLFDIHTSGLLAEIHT) form a WD 1-5 repeat. The WD 1-6 repeat unit spans residues 838 to 877 (GHHSTIQYCDFSPYDHLAVIALSQYCVELWNIDSRLKVAD). Residues 880-910 (GHLSWVHGVMFSPDGSSFLTASDDQTIRVWE) form a WD 1-7 repeat. The interpropeller linker stretch occupies residues 910 to 921 (ETKKVCKNSAIV). A WD 2-1 repeat occupies 922–958 (LKQEIDVVFQENETMVLAVDNIRGLQLIAGKTGQIDY). The stretch at 959-998 (LPEAQVSCCCLSPHLEYVAFGDEDGAIKIIELPNNRVFSS) is one WD 2-2 repeat. A WD 2-3 repeat occupies 1001–1040 (GHKKAVRHIQFTADGKTLISSSEDSVIQVWNWQTGDYVFL). The WD 2-4 repeat unit spans residues 1042–1080 (AHQETVKDFRLLQDSRLLSWSFDGTVKVWNVITGRIERD). The WD 2-5 repeat unit spans residues 1083–1122 (CHQGTVLSCAISSDATKFSSTSADKTAKIWSFDLLSPLHE). The stretch at 1125 to 1164 (GHNGCVRCSAFSLDGILLATGDDNGEIRIWNVSDGQLLHS) is one WD 2-6 repeat. The stretch at 1176 to 1213 (THGGWVTDVCFSPDSKTLVSAGGYLKWWNVATGDSSQT) is one WD 2-7 repeat. The stretch at 1214–1249 (FYTNGTNLKKIHVSPDFRTYVTVDNLGILYILQVLE) is one WD 2-8 repeat.

In terms of assembly, monomer. Oligomerizes to a heptameric ring, known as the apoptosome, upon binding of cytochrome c and dATP. Oligomeric Apaf-1 and pro-caspase-9 bind to each other via their respective NH2-terminal CARD domains and consecutively mature caspase-9 is released from the complex. Interacts with UACA. It may also interact with Bcl-XL. Interacts with APIP. Interacts (via CARD and NACHT domains) with NAIP/BIRC1 (via NACHT domain). Interacts with CIAO2A. In terms of tissue distribution, highly expressed in lung and spleen, weakly in brain and kidney and not detectable in liver.

The protein resides in the cytoplasm. Oligomeric Apaf-1 mediates the cytochrome c-dependent autocatalytic activation of pro-caspase-9 (Apaf-3), leading to the activation of caspase-3 and apoptosis. This activation requires ATP. This chain is Apoptotic protease-activating factor 1 (Apaf1), found in Mus musculus (Mouse).